Here is a 577-residue protein sequence, read N- to C-terminus: MNIQALLSEKVSQALIAAGAPADCEPQVRQSAKVQFGDYQANGVMAVAKKLGMPPRQLAELVLTHLDLNGIANKVEIAGPGFINIFLDPAFLASHVDAALKSERLGVAQPKAETIVVDYSAPNVAKEMHVGHLRSTIIGDAAVRTLEFLGHKVIRANHVGDWGTQFGMLIAFLEKQQQENAGEMALADLEGFYREAKKHYDEDAAFAERARSYVVKLQGGDEYFREMWRKLVDITMSQNQLAYNRLNVTLTRDDVMGESLYNPMLPGIVADLKAKKLAVESEGATVVFLDEYKNKEGEPMGVIIQKKDGGYLYTTTDIACAKYRYETLHADRVLYYIDSRQHQHLMQAWTIVRKAGYVPESVPLEHHMFGMMLGKDGKPFKTRAGGTVKLSDLLDEALERARRLVAEKNPDMPAEELEKLANAVGIGAVKYADLSKNRTTDYIFDWDNMLAFEGNTAPYMQYAYTRVLSVFRKANIDESALANAAVVITEDREAQLAARLLQFEETLTVVAREGTPHVMCSYLYDLAGLFSGFYEHCPILSADNEEARNSRLKLAQLTAKTLKLGLDTLGIETVERM.

A 'HIGH' region motif is present at residues 122–132 (PNVAKEMHVGH).

Belongs to the class-I aminoacyl-tRNA synthetase family. As to quaternary structure, monomer.

The protein resides in the cytoplasm. The catalysed reaction is tRNA(Arg) + L-arginine + ATP = L-arginyl-tRNA(Arg) + AMP + diphosphate. The polypeptide is Arginine--tRNA ligase (Enterobacter sp. (strain 638)).